We begin with the raw amino-acid sequence, 200 residues long: Peptidyl-tRNA hydrolase (200 aa).

A tRNA-binding site is contributed by Y15. Catalysis depends on H20, which acts as the Proton acceptor. TRNA is bound by residues Y66, N68, and N114.

This sequence belongs to the PTH family. Monomer.

Its subcellular location is the cytoplasm. It catalyses the reaction an N-acyl-L-alpha-aminoacyl-tRNA + H2O = an N-acyl-L-amino acid + a tRNA + H(+). In terms of biological role, hydrolyzes ribosome-free peptidyl-tRNAs (with 1 or more amino acids incorporated), which drop off the ribosome during protein synthesis, or as a result of ribosome stalling. Functionally, catalyzes the release of premature peptidyl moieties from peptidyl-tRNA molecules trapped in stalled 50S ribosomal subunits, and thus maintains levels of free tRNAs and 50S ribosomes. This Paraburkholderia phymatum (strain DSM 17167 / CIP 108236 / LMG 21445 / STM815) (Burkholderia phymatum) protein is Peptidyl-tRNA hydrolase.